The following is a 124-amino-acid chain: Multifunctional methyltransferase subunit TRM112 homolog B (124 aa).

The region spanning 2–120 (RLIVHNMLSC…SKGIPNMLLH (119 aa)) is the TRM112 domain.

It belongs to the TRM112 family. Interacts with TRM9. As to expression, expressed in anthers.

Acts as an activator of both rRNA/tRNA and protein methyltransferases. Required for TRM9 tRNA methyltransferase activity. The sequence is that of Multifunctional methyltransferase subunit TRM112 homolog B from Arabidopsis thaliana (Mouse-ear cress).